The chain runs to 372 residues: N-methyl-L-tryptophan oxidase (372 aa).

Aspartate 4–histidine 34 lines the FAD pocket. Residue cysteine 308 is modified to S-8alpha-FAD cysteine.

Belongs to the MSOX/MTOX family. MTOX subfamily. In terms of assembly, monomer. FAD is required as a cofactor.

It catalyses the reaction N(alpha)-methyl-L-tryptophan + O2 + H2O = L-tryptophan + formaldehyde + H2O2. Its function is as follows. Catalyzes the oxidative demethylation of N-methyl-L-tryptophan. This Escherichia coli O157:H7 protein is N-methyl-L-tryptophan oxidase.